A 752-amino-acid polypeptide reads, in one-letter code: MSQPDQEAQALAAGFSADAAKTRLAELAKRLSDANTAYHAADAPDLSDADYDALKRENAAIEAAFPDLKRADSPSDQVGAAPAEGFSKLTHTQRMLSLANAFDAGDVPDFVAGIRRYLNLGAEADLPFTAEPKIDGLSLSLRYEDGQLVSAATRGDGAIGENVTANARTIDDIPQTLTDAPDVLEVRGEVYMSHADFAALNDRQAEAGAKTFANPRNAAAGSLRQLDASITRSRPLRFFAYAWGEVSAPLAATQSGALNTLKTLGFQINDRTKTCHSAEDMLAHYASIEQDRADLGYDIDGVVYKIDDLDYQRRLGMRSTTPRWAIAHKFPAELAWTTLEAIDIQVGRTGALSPVARLTPVTVGGVVVSNATLHNEDYIAGRDANGGPIRDGKDIRVGDRVQVYRAGDVIPKVADVDLAKRPENTAKYAFPDHCPQCQSEAIREEGDAVRRCTGGLICPAQAVEKLKHFVSRAAFDIDGLGAKQVEAFYLDGWIAEPADIFRLKENYGEGMKQLRNREGWGEKSATSLFNAIDDKRSIALHRLIFALGIRHVGEVAASDLARHFTTWKALAEIVDQAAPAAEAHRRAEDAVLAERKAAADEGRRASLQPQRDKAWADTPEPAKAAWDDLTGIDGIGATVAVSLVTTFQQARERASIDRLITELTDIQPPEARATQSAVAGLTVVFTGALERMTRAEAKARAEAMGAKVSGSVSAKTDIVVAGPGAGSKEKKAKDLGIELLTEEQWLDRIGDA.

NAD(+) is bound by residues 48-52 (DADYD), 97-98 (SL), and E131. The active-site N6-AMP-lysine intermediate is K133. Residues R154, E189, K305, and K329 each contribute to the NAD(+) site. Zn(2+)-binding residues include C434, C437, C452, and C458. Basic and acidic residues predominate over residues 599-615 (ADEGRRASLQPQRDKAW). Positions 599–618 (ADEGRRASLQPQRDKAWADT) are disordered. Positions 673–752 (ATQSAVAGLT…EQWLDRIGDA (80 aa)) constitute a BRCT domain.

The protein belongs to the NAD-dependent DNA ligase family. LigA subfamily. It depends on Mg(2+) as a cofactor. Requires Mn(2+) as cofactor.

It carries out the reaction NAD(+) + (deoxyribonucleotide)n-3'-hydroxyl + 5'-phospho-(deoxyribonucleotide)m = (deoxyribonucleotide)n+m + AMP + beta-nicotinamide D-nucleotide.. Functionally, DNA ligase that catalyzes the formation of phosphodiester linkages between 5'-phosphoryl and 3'-hydroxyl groups in double-stranded DNA using NAD as a coenzyme and as the energy source for the reaction. It is essential for DNA replication and repair of damaged DNA. In Jannaschia sp. (strain CCS1), this protein is DNA ligase.